The primary structure comprises 101 residues: uncharacterized protein (101 aa).

Residues 76 to 101 (KGNVTRRRKKTHLGNDDGKKEAQEKM) are disordered. Over residues 88–101 (LGNDDGKKEAQEKM) the composition is skewed to basic and acidic residues.

This is an uncharacterized protein from Homo sapiens (Human).